Reading from the N-terminus, the 240-residue chain is MATLFIADLHLCVEEPAITAGFLRFLAGEARKADALYILGDLFEAWIGDDDPNPLHHQMAAAIKAVSDSGVPCYFIHGNRDFLLGKRFARESGMTLLPEEKVLELYGRRVLIMHGDTLCTDDAGYQAFRAKVHKPWLQTLFLALPLFVRKRIAARMRANSKEANSSKSLAIMDVNQNAVVSAMEKHQVQWLIHGHTHRPAVHELIANQQTAFRVVLGAWHTEGSMVKVTADDVELIHFPF.

Residues D8, H10, D41, N79, and H114 each coordinate Mn(2+). Substrate is bound at residue 79-80 (NR). Residues D122, S160, N164, K167, and H195 each contribute to the substrate site. Mn(2+) is bound by residues H195 and H197.

The protein belongs to the LpxH family. Mn(2+) serves as cofactor.

Its subcellular location is the cell inner membrane. It catalyses the reaction UDP-2-N,3-O-bis[(3R)-3-hydroxytetradecanoyl]-alpha-D-glucosamine + H2O = 2-N,3-O-bis[(3R)-3-hydroxytetradecanoyl]-alpha-D-glucosaminyl 1-phosphate + UMP + 2 H(+). It participates in glycolipid biosynthesis; lipid IV(A) biosynthesis; lipid IV(A) from (3R)-3-hydroxytetradecanoyl-[acyl-carrier-protein] and UDP-N-acetyl-alpha-D-glucosamine: step 4/6. Hydrolyzes the pyrophosphate bond of UDP-2,3-diacylglucosamine to yield 2,3-diacylglucosamine 1-phosphate (lipid X) and UMP by catalyzing the attack of water at the alpha-P atom. Involved in the biosynthesis of lipid A, a phosphorylated glycolipid that anchors the lipopolysaccharide to the outer membrane of the cell. This Escherichia coli O6:K15:H31 (strain 536 / UPEC) protein is UDP-2,3-diacylglucosamine hydrolase.